A 185-amino-acid chain; its full sequence is Isopentenyl-diphosphate Delta-isomerase (185 aa).

2 residues coordinate Mn(2+): His27 and His34. Residues Pro32–Leu168 enclose the Nudix hydrolase domain. Cys69 is an active-site residue. Position 69 (Cys69) interacts with Mg(2+). His71 is a binding site for Mn(2+). Residue Glu89 participates in Mg(2+) binding. Mn(2+) contacts are provided by Glu118 and Glu120. The active site involves Glu120.

Belongs to the IPP isomerase type 1 family. Mg(2+) serves as cofactor. It depends on Mn(2+) as a cofactor.

The protein resides in the cytoplasm. The catalysed reaction is isopentenyl diphosphate = dimethylallyl diphosphate. Its pathway is isoprenoid biosynthesis; dimethylallyl diphosphate biosynthesis; dimethylallyl diphosphate from isopentenyl diphosphate: step 1/1. Catalyzes the 1,3-allylic rearrangement of the homoallylic substrate isopentenyl (IPP) to its highly electrophilic allylic isomer, dimethylallyl diphosphate (DMAPP). The polypeptide is Isopentenyl-diphosphate Delta-isomerase (Leifsonia xyli subsp. xyli (strain CTCB07)).